The sequence spans 171 residues: MTKQHSFEREELLQCSQGELFGPGNAQLPAPNMLMLDRVVRICEEGGHYGKGELIAELDIHPDLWFFDCHFPGDPVMPGCLGLDAMWQLVGFHLGWLGHPGRGRALGCGEVKFSGQILPDANKVTYHIHMKRVITRRLILGIADGTVSVDGREIYQANDLRVGLFTSTANF.

Residue His70 is part of the active site.

This sequence belongs to the thioester dehydratase family. FabA subfamily. Homodimer.

Its subcellular location is the cytoplasm. It catalyses the reaction a (3R)-hydroxyacyl-[ACP] = a (2E)-enoyl-[ACP] + H2O. It carries out the reaction (3R)-hydroxydecanoyl-[ACP] = (2E)-decenoyl-[ACP] + H2O. The catalysed reaction is (2E)-decenoyl-[ACP] = (3Z)-decenoyl-[ACP]. The protein operates within lipid metabolism; fatty acid biosynthesis. Its function is as follows. Necessary for the introduction of cis unsaturation into fatty acids. Catalyzes the dehydration of (3R)-3-hydroxydecanoyl-ACP to E-(2)-decenoyl-ACP and then its isomerization to Z-(3)-decenoyl-ACP. Can catalyze the dehydratase reaction for beta-hydroxyacyl-ACPs with saturated chain lengths up to 16:0, being most active on intermediate chain length. The protein is 3-hydroxydecanoyl-[acyl-carrier-protein] dehydratase of Chromohalobacter salexigens (strain ATCC BAA-138 / DSM 3043 / CIP 106854 / NCIMB 13768 / 1H11).